Consider the following 202-residue polypeptide: Dephospho-CoA kinase (202 aa).

The 199-residue stretch at 3 to 201 folds into the DPCK domain; the sequence is AIGLTGGIGS…QRYLGFAAAA (199 aa). 11 to 16 is an ATP binding site; that stretch reads GSGKTT.

The protein belongs to the CoaE family.

The protein localises to the cytoplasm. It carries out the reaction 3'-dephospho-CoA + ATP = ADP + CoA + H(+). Its pathway is cofactor biosynthesis; coenzyme A biosynthesis; CoA from (R)-pantothenate: step 5/5. In terms of biological role, catalyzes the phosphorylation of the 3'-hydroxyl group of dephosphocoenzyme A to form coenzyme A. The polypeptide is Dephospho-CoA kinase (Burkholderia lata (strain ATCC 17760 / DSM 23089 / LMG 22485 / NCIMB 9086 / R18194 / 383)).